A 146-amino-acid chain; its full sequence is Cytochrome c oxidase assembly factor 1 homolog (146 aa).

At 1–14 the chain is on the mitochondrial matrix side; sequence MMWQKYAGSRRSMP. A helical transmembrane segment spans residues 15–37; that stretch reads LGARILFHGVFYAGGFAIVYYLI. The Mitochondrial intermembrane portion of the chain corresponds to 38 to 146; sequence QKFHSRALYY…GENGDEVKKE (109 aa).

This sequence belongs to the COA1 family. Component of the MITRAC (mitochondrial translation regulation assembly intermediate of cytochrome c oxidase complex) complex, the core components of this complex being COA3/MITRAC12 and COX14. Interacts with COX17 and COA6. Part of the mitochondrial complex I assembly/MCIA complex that comprises at least the core subunits TMEM126B, NDUFAF1, ECSIT and ACAD9 and complement subunits such as COA1 and TMEM186.

The protein localises to the mitochondrion inner membrane. Component of the MITRAC (mitochondrial translation regulation assembly intermediate of cytochrome c oxidase complex) complex, that regulates cytochrome c oxidase assembly. MITRAC complexes regulate both translation of mitochondrial encoded components and assembly of nuclear-encoded components imported in mitochondrion. Required for assembly of mitochondrial respiratory chain complex I and complex IV. As part of the MCIA complex, required for efficient assembly of the mitochondrial complex I. The protein is Cytochrome c oxidase assembly factor 1 homolog of Homo sapiens (Human).